The primary structure comprises 179 residues: Large ribosomal subunit protein uL5 (179 aa).

The protein belongs to the universal ribosomal protein uL5 family. Part of the 50S ribosomal subunit; part of the 5S rRNA/L5/L18/L25 subcomplex. Contacts the 5S rRNA and the P site tRNA. Forms a bridge to the 30S subunit in the 70S ribosome.

This is one of the proteins that bind and probably mediate the attachment of the 5S RNA into the large ribosomal subunit, where it forms part of the central protuberance. In the 70S ribosome it contacts protein S13 of the 30S subunit (bridge B1b), connecting the 2 subunits; this bridge is implicated in subunit movement. Contacts the P site tRNA; the 5S rRNA and some of its associated proteins might help stabilize positioning of ribosome-bound tRNAs. This chain is Large ribosomal subunit protein uL5, found in Geobacter sp. (strain M21).